The chain runs to 151 residues: Large-conductance mechanosensitive channel (151 aa).

Helical transmembrane passes span 19-39 and 85-105; these read VGIIIGGAFTGIVKSLVGDVL and GLFINAFISFVIMAVAVFFLV.

It belongs to the MscL family. In terms of assembly, homopentamer.

The protein resides in the cell inner membrane. Its function is as follows. Channel that opens in response to stretch forces in the membrane lipid bilayer. May participate in the regulation of osmotic pressure changes within the cell. The polypeptide is Large-conductance mechanosensitive channel (Chlorobaculum parvum (strain DSM 263 / NCIMB 8327) (Chlorobium vibrioforme subsp. thiosulfatophilum)).